Consider the following 273-residue polypeptide: Dermonecrotic toxin LruSicTox-alphaIC1c (273 aa).

His-5 is an active-site residue. Positions 25 and 27 each coordinate Mg(2+). Residue His-41 is the Nucleophile of the active site. 2 cysteine pairs are disulfide-bonded: Cys-45-Cys-51 and Cys-47-Cys-190. Position 85 (Asp-85) interacts with Mg(2+).

The protein belongs to the arthropod phospholipase D family. Class II subfamily. The cofactor is Mg(2+). As to expression, expressed by the venom gland.

Its subcellular location is the secreted. The enzyme catalyses an N-(acyl)-sphingosylphosphocholine = an N-(acyl)-sphingosyl-1,3-cyclic phosphate + choline. It carries out the reaction an N-(acyl)-sphingosylphosphoethanolamine = an N-(acyl)-sphingosyl-1,3-cyclic phosphate + ethanolamine. It catalyses the reaction a 1-acyl-sn-glycero-3-phosphocholine = a 1-acyl-sn-glycero-2,3-cyclic phosphate + choline. The catalysed reaction is a 1-acyl-sn-glycero-3-phosphoethanolamine = a 1-acyl-sn-glycero-2,3-cyclic phosphate + ethanolamine. Its function is as follows. Dermonecrotic toxins cleave the phosphodiester linkage between the phosphate and headgroup of certain phospholipids (sphingolipid and lysolipid substrates), forming an alcohol (often choline) and a cyclic phosphate. This toxin acts on sphingomyelin (SM). It may also act on ceramide phosphoethanolamine (CPE), lysophosphatidylcholine (LPC) and lysophosphatidylethanolamine (LPE), but not on lysophosphatidylserine (LPS), and lysophosphatidylglycerol (LPG). It acts by transphosphatidylation, releasing exclusively cyclic phosphate products as second products. Induces dermonecrosis, hemolysis, increased vascular permeability, edema, inflammatory response, and platelet aggregation. This is Dermonecrotic toxin LruSicTox-alphaIC1c from Loxosceles rufescens (Mediterranean recluse spider).